We begin with the raw amino-acid sequence, 607 residues long: MPRIHVLPPGLVNQIAAGEVVERPASIVKELVENALDAGATSVGVDVEEGGLALVRVADDGSGMDRDDALLALERHATSKLRDAEGLAAIGTMGFRGEAVPAIASVSRFRLDTSAGEDGAGTRVEIEGGVLGEVAPVARPRGTTVEVRDLFFNTPARRKFMRAASTEAGHVSEAVIRLALARPDVGFTLRSAGRLVLGARAGGGLADRAGQALGREAHRHLLPVDARRGEVRVHGLICSPDHSEATGRALYLFVNGRYVRDRAAAHAVLRAFAGTLPPGRHPAGVLFVELPLHRVDVNVHPQKLEVRFAEGREVFDALFHTVAGALRTAPWLRARPQPGDGVPAGNGGGPAPVPVAGEEAAEVLAWARAARPPEGSGATLVQPAPGAWATGRLAFPVAPAPGAGPEAGPRPEGYFAALRYVGQHARTYLLCEAPGGTLVVIDQHASHERMLFHRLREAFRARRIPVQPFLLPQVVTLPPAAARALEAGLAELGRLGFDAEPFGGEAFAVKGAPAALAGVDLTALLTDLGSQLAEVERGSAVDDAFHDLLATMACHAAVRANQDVSPEEARALLDGLDAIDFKARCPHGRPVVFELSLADLERRVGRR.

This sequence belongs to the DNA mismatch repair MutL/HexB family.

Its function is as follows. This protein is involved in the repair of mismatches in DNA. It is required for dam-dependent methyl-directed DNA mismatch repair. May act as a 'molecular matchmaker', a protein that promotes the formation of a stable complex between two or more DNA-binding proteins in an ATP-dependent manner without itself being part of a final effector complex. The sequence is that of DNA mismatch repair protein MutL from Anaeromyxobacter dehalogenans (strain 2CP-1 / ATCC BAA-258).